The following is a 339-amino-acid chain: Phosphate acyltransferase (339 aa).

The protein belongs to the PlsX family. In terms of assembly, homodimer. Probably interacts with PlsY.

The protein resides in the cytoplasm. It catalyses the reaction a fatty acyl-[ACP] + phosphate = an acyl phosphate + holo-[ACP]. Its pathway is lipid metabolism; phospholipid metabolism. In terms of biological role, catalyzes the reversible formation of acyl-phosphate (acyl-PO(4)) from acyl-[acyl-carrier-protein] (acyl-ACP). This enzyme utilizes acyl-ACP as fatty acyl donor, but not acyl-CoA. In Clostridium perfringens (strain SM101 / Type A), this protein is Phosphate acyltransferase.